Consider the following 440-residue polypeptide: MAVKLGTLLLALALGLAQPASARRKLLVFLLDGFRSDYISDEALESLPGFKEIVSRGVKVDYLTPDFPSLSYPNYYTLMTGRHCEVHQMIGNYMWDPTTNKSFDIGVNKDSLMPLWWNGSEPLWVTLTKAKRKVYMYYWPGCEVEILGVRPTYCLEYKNVPTDINFANAVSDALDSFKSGRADLAAIYHERIDVEGHHYGPASPQRKDALKAVDTVLKYMTKWIQERGLQDRLNVIIFSDHGMTDIFWMDKVIELNKYISLNDLQQAKDRGPVVSLWPAPGKHSEIYNKLSTVEHMTVYEKEAIPSRFYYKKGKFVSPLTLVADEGWFITENREMLPFWMNSTGRGNGWQRGWHGYDNELMDMRGIFLAFGPDFKSNFRAAPIRSVDVYNVMCNVVGITPLPNNGSWSRVMCMLKGRAGTTPPVQPSHCALALILLFLLA.

Residues 1–22 form the signal peptide; that stretch reads MAVKLGTLLLALALGLAQPASA. Positions 32, 71, and 92 each coordinate substrate. Positions 32 and 71 each coordinate Zn(2+). The Nucleophile role is filled by S71. The residue at position 71 (S71) is a Phosphoserine. N100 and N118 each carry an N-linked (GlcNAc...) asparagine glycan. Residues C142 and C154 are joined by a disulfide bond. D193 provides a ligand contact to substrate. 4 residues coordinate Zn(2+): D193, H197, D240, and H241. H241 serves as a coordination point for substrate. A glycan (N-linked (GlcNAc...) asparagine) is linked at N341. H354 serves as a coordination point for substrate. Residue H354 coordinates Zn(2+). The N-linked (GlcNAc...) asparagine glycan is linked to N404. The GPI-anchor amidated alanine moiety is linked to residue A418. The propeptide at 419-440 is removed in mature form; it reads GTTPPVQPSHCALALILLFLLA.

This sequence belongs to the nucleotide pyrophosphatase/phosphodiesterase family. In terms of assembly, homodimer; disulfide-linked. Homotetramer. It depends on Zn(2+) as a cofactor.

The protein resides in the cell membrane. It catalyses the reaction sn-glycerol 3-phosphocholine + H2O = phosphocholine + glycerol + H(+). It carries out the reaction a 1-acyl-sn-glycero-3-phosphocholine + H2O = a 1-acyl-sn-glycerol + phosphocholine + H(+). The catalysed reaction is a 1-O-alkyl-sn-glycero-3-phosphocholine + H2O = a 1-O-alkyl-sn-glycerol + phosphocholine + H(+). The enzyme catalyses 1-dodecanoyl-sn-glycero-3-phosphocholine + H2O = 1-dodecanoyl-sn-glycerol + phosphocholine + H(+). It catalyses the reaction 1-hexadecanoyl-sn-glycero-3-phosphocholine + H2O = 1-hexadecanoyl-sn-glycerol + phosphocholine + H(+). It carries out the reaction 1-(5Z,8Z,11Z,14Z-eicosatetraenoyl)-sn-glycero-3-phosphocholine + H2O = 1-(5Z,8Z,11Z,14Z-eicosatetraenoyl)-sn-glycerol + phosphocholine + H(+). The catalysed reaction is 1-tetradecanoyl-sn-glycero-3-phosphocholine + H2O = 1-tetradecanoyl-sn-glycerol + phosphocholine + H(+). The enzyme catalyses sphing-4-enine-phosphocholine + H2O = sphing-4-enine + phosphocholine + H(+). It catalyses the reaction 1-(9Z-octadecenoyl)-sn-glycero-3-phosphocholine + H2O = 1-(9Z-octadecenoyl)-sn-glycerol + phosphocholine + H(+). It carries out the reaction 1-(9Z,12Z)-octadecadienoyl-sn-glycero-3-phosphocholine + H2O = 1-(9Z,12Z-octadecadienoyl)-sn-glycerol + phosphocholine + H(+). The catalysed reaction is glycero-2-phosphocholine + H2O = phosphocholine + glycerol + H(+). Inhibited by EDTA and EGTA in vitro. Functionally, choline-specific glycerophosphodiesterase that hydrolyzes glycerophosphocholine (GPC) and lysophosphatidylcholine (LPC) and contributes to supplying choline to the cells. Has a preference for LPC with short (12:0 and 14:0) or polyunsaturated (18:2 and 20:4) fatty acids. In vitro, hydrolyzes only choline-containing lysophospholipids, such as sphingosylphosphorylcholine (SPC), platelet-activating factor (PAF) and lysoPAF, but not other lysophospholipids. In Pongo abelii (Sumatran orangutan), this protein is Glycerophosphocholine cholinephosphodiesterase ENPP6.